A 454-amino-acid polypeptide reads, in one-letter code: tRNA modification GTPase MnmE (454 aa).

The (6S)-5-formyl-5,6,7,8-tetrahydrofolate site is built by arginine 23, glutamate 80, and lysine 120. Positions 216-377 (GMKVVIAGRP…LRNHLKQSMG (162 aa)) constitute a TrmE-type G domain. Asparagine 226 is a binding site for K(+). Residues 226–231 (NAGKSS), 245–251 (TDIAGTT), 270–273 (DTAG), 335–338 (NKAD), and 358–360 (SAR) contribute to the GTP site. Serine 230 lines the Mg(2+) pocket. Threonine 245, isoleucine 247, and threonine 250 together coordinate K(+). Threonine 251 provides a ligand contact to Mg(2+). (6S)-5-formyl-5,6,7,8-tetrahydrofolate is bound at residue lysine 454.

Belongs to the TRAFAC class TrmE-Era-EngA-EngB-Septin-like GTPase superfamily. TrmE GTPase family. In terms of assembly, homodimer. Heterotetramer of two MnmE and two MnmG subunits. Requires K(+) as cofactor.

The protein resides in the cytoplasm. Its function is as follows. Exhibits a very high intrinsic GTPase hydrolysis rate. Involved in the addition of a carboxymethylaminomethyl (cmnm) group at the wobble position (U34) of certain tRNAs, forming tRNA-cmnm(5)s(2)U34. This is tRNA modification GTPase MnmE from Salmonella arizonae (strain ATCC BAA-731 / CDC346-86 / RSK2980).